The following is a 672-amino-acid chain: tRNA 5-methylaminomethyl-2-thiouridine biosynthesis bifunctional protein MnmC (672 aa).

The tRNA (mnm(5)s(2)U34)-methyltransferase stretch occupies residues 1–243; sequence MTSIKNAELG…KREMIAGSME (243 aa). The interval 269-672 is FAD-dependent cmnm(5)s(2)U34 oxidoreductase; sequence IGGGIASAAL…LRKGKAITEL (404 aa).

This sequence in the N-terminal section; belongs to the methyltransferase superfamily. tRNA (mnm(5)s(2)U34)-methyltransferase family. In the C-terminal section; belongs to the DAO family. FAD serves as cofactor.

Its subcellular location is the cytoplasm. It carries out the reaction 5-aminomethyl-2-thiouridine(34) in tRNA + S-adenosyl-L-methionine = 5-methylaminomethyl-2-thiouridine(34) in tRNA + S-adenosyl-L-homocysteine + H(+). Its function is as follows. Catalyzes the last two steps in the biosynthesis of 5-methylaminomethyl-2-thiouridine (mnm(5)s(2)U) at the wobble position (U34) in tRNA. Catalyzes the FAD-dependent demodification of cmnm(5)s(2)U34 to nm(5)s(2)U34, followed by the transfer of a methyl group from S-adenosyl-L-methionine to nm(5)s(2)U34, to form mnm(5)s(2)U34. The polypeptide is tRNA 5-methylaminomethyl-2-thiouridine biosynthesis bifunctional protein MnmC (Vibrio campbellii (strain ATCC BAA-1116)).